A 207-amino-acid polypeptide reads, in one-letter code: Probable GTP-binding protein EngB (207 aa).

Positions 22–193 (RVPEIVFAGR…LAHFDHYLSG (172 aa)) constitute an EngB-type G domain. GTP contacts are provided by residues 30–37 (GRSNVGKS), 57–61 (GKTRL), 75–78 (DIPG), 142–145 (TKDD), and 172–174 (YSS). Ser37 and Thr59 together coordinate Mg(2+).

It belongs to the TRAFAC class TrmE-Era-EngA-EngB-Septin-like GTPase superfamily. EngB GTPase family. Mg(2+) serves as cofactor.

Necessary for normal cell division and for the maintenance of normal septation. The chain is Probable GTP-binding protein EngB from Chlorobium luteolum (strain DSM 273 / BCRC 81028 / 2530) (Pelodictyon luteolum).